A 729-amino-acid chain; its full sequence is Phosphoribosylformylglycinamidine synthase subunit PurL (729 aa).

Residue His-54 is part of the active site. Positions 57 and 96 each coordinate ATP. Position 98 (Glu-98) interacts with Mg(2+). Residues 99 to 102 (SHNH) and Arg-121 contribute to the substrate site. His-100 serves as the catalytic Proton acceptor. Asp-122 provides a ligand contact to Mg(2+). A substrate-binding site is contributed by Gln-245. Residue Asp-273 participates in Mg(2+) binding. 317 to 319 (ETQ) serves as a coordination point for substrate. Residues Asp-495 and Gly-532 each coordinate ATP. Mg(2+) is bound at residue Asn-533. Ser-535 contacts substrate.

This sequence belongs to the FGAMS family. In terms of assembly, monomer. Part of the FGAM synthase complex composed of 1 PurL, 1 PurQ and 2 PurS subunits.

It localises to the cytoplasm. It catalyses the reaction N(2)-formyl-N(1)-(5-phospho-beta-D-ribosyl)glycinamide + L-glutamine + ATP + H2O = 2-formamido-N(1)-(5-O-phospho-beta-D-ribosyl)acetamidine + L-glutamate + ADP + phosphate + H(+). The protein operates within purine metabolism; IMP biosynthesis via de novo pathway; 5-amino-1-(5-phospho-D-ribosyl)imidazole from N(2)-formyl-N(1)-(5-phospho-D-ribosyl)glycinamide: step 1/2. Part of the phosphoribosylformylglycinamidine synthase complex involved in the purines biosynthetic pathway. Catalyzes the ATP-dependent conversion of formylglycinamide ribonucleotide (FGAR) and glutamine to yield formylglycinamidine ribonucleotide (FGAM) and glutamate. The FGAM synthase complex is composed of three subunits. PurQ produces an ammonia molecule by converting glutamine to glutamate. PurL transfers the ammonia molecule to FGAR to form FGAM in an ATP-dependent manner. PurS interacts with PurQ and PurL and is thought to assist in the transfer of the ammonia molecule from PurQ to PurL. The protein is Phosphoribosylformylglycinamidine synthase subunit PurL of Staphylococcus haemolyticus (strain JCSC1435).